Consider the following 423-residue polypeptide: Glutamyl-tRNA reductase (423 aa).

Substrate is bound by residues 49 to 52 (TCNR), Ser-111, 116 to 118 (EPQ), and Gln-122. Catalysis depends on Cys-50, which acts as the Nucleophile. Residue 191 to 196 (GAGEMS) coordinates NADP(+).

Belongs to the glutamyl-tRNA reductase family. In terms of assembly, homodimer.

It carries out the reaction (S)-4-amino-5-oxopentanoate + tRNA(Glu) + NADP(+) = L-glutamyl-tRNA(Glu) + NADPH + H(+). It participates in porphyrin-containing compound metabolism; protoporphyrin-IX biosynthesis; 5-aminolevulinate from L-glutamyl-tRNA(Glu): step 1/2. Catalyzes the NADPH-dependent reduction of glutamyl-tRNA(Glu) to glutamate 1-semialdehyde (GSA). The protein is Glutamyl-tRNA reductase of Syntrophus aciditrophicus (strain SB).